The sequence spans 704 residues: Elongation factor G (704 aa).

In terms of domain architecture, tr-type G spans 8–291 (DRVRNIGIMA…AVIDYLASPV (284 aa)). GTP is bound by residues 17–24 (AHIDAGKT), 90–94 (DTPGH), and 144–147 (NKMD).

The protein belongs to the TRAFAC class translation factor GTPase superfamily. Classic translation factor GTPase family. EF-G/EF-2 subfamily.

It localises to the cytoplasm. Functionally, catalyzes the GTP-dependent ribosomal translocation step during translation elongation. During this step, the ribosome changes from the pre-translocational (PRE) to the post-translocational (POST) state as the newly formed A-site-bound peptidyl-tRNA and P-site-bound deacylated tRNA move to the P and E sites, respectively. Catalyzes the coordinated movement of the two tRNA molecules, the mRNA and conformational changes in the ribosome. The protein is Elongation factor G of Chlorobaculum tepidum (strain ATCC 49652 / DSM 12025 / NBRC 103806 / TLS) (Chlorobium tepidum).